We begin with the raw amino-acid sequence, 126 residues long: uncharacterized protein (126 aa).

Residues 48 to 68 (ILCMFPWQCVVYVFSNFVWLV) form a helical membrane-spanning segment.

The protein resides in the membrane. This is an uncharacterized protein from Homo sapiens (Human).